A 523-amino-acid chain; its full sequence is Histidine ammonia-lyase (523 aa).

Positions 148–150 (ASG) form a cross-link, 5-imidazolinone (Ala-Gly). Serine 149 bears the 2,3-didehydroalanine (Ser) mark.

Belongs to the PAL/histidase family. In terms of processing, contains an active site 4-methylidene-imidazol-5-one (MIO), which is formed autocatalytically by cyclization and dehydration of residues Ala-Ser-Gly.

The protein localises to the cytoplasm. The catalysed reaction is L-histidine = trans-urocanate + NH4(+). The protein operates within amino-acid degradation; L-histidine degradation into L-glutamate; N-formimidoyl-L-glutamate from L-histidine: step 1/3. The chain is Histidine ammonia-lyase from Chloroflexus aurantiacus (strain ATCC 29366 / DSM 635 / J-10-fl).